Here is a 906-residue protein sequence, read N- to C-terminus: Protein translocase subunit SecA (906 aa).

ATP is bound by residues Gln86, 104 to 108, and Asp511; that span reads GEGKT. 2 stretches are compositionally biased toward basic and acidic residues: residues 853–865 and 877–888; these read HESV…RHDE and VRREGPKVKRND. A disordered region spans residues 853-906; that stretch reads HESVIDNNQRHDEDEQEEAPKVQQVRREGPKVKRNDPCPCGSGKKYKQCHSKVE. Cys890, Cys892, Cys901, and His902 together coordinate Zn(2+). The span at 896–906 shows a compositional bias: basic residues; it reads KKYKQCHSKVE.

The protein belongs to the SecA family. As to quaternary structure, monomer and homodimer. Part of the essential Sec protein translocation apparatus which comprises SecA, SecYEG and auxiliary proteins SecDF-YajC and YidC. Zn(2+) serves as cofactor.

It localises to the cell inner membrane. The protein resides in the cytoplasm. It catalyses the reaction ATP + H2O + cellular proteinSide 1 = ADP + phosphate + cellular proteinSide 2.. Functionally, part of the Sec protein translocase complex. Interacts with the SecYEG preprotein conducting channel. Has a central role in coupling the hydrolysis of ATP to the transfer of proteins into and across the cell membrane, serving both as a receptor for the preprotein-SecB complex and as an ATP-driven molecular motor driving the stepwise translocation of polypeptide chains across the membrane. The chain is Protein translocase subunit SecA from Francisella tularensis subsp. mediasiatica (strain FSC147).